A 144-amino-acid polypeptide reads, in one-letter code: Large ribosomal subunit protein uL15 (144 aa).

The span at Met-1–Gly-14 shows a compositional bias: basic residues. The interval Met-1–Arg-35 is disordered.

Belongs to the universal ribosomal protein uL15 family. Part of the 50S ribosomal subunit.

Functionally, binds to the 23S rRNA. The polypeptide is Large ribosomal subunit protein uL15 (Saccharolobus solfataricus (strain ATCC 35092 / DSM 1617 / JCM 11322 / P2) (Sulfolobus solfataricus)).